Here is a 334-residue protein sequence, read N- to C-terminus: Serine/threonine-protein kinase (334 aa).

A Protein kinase domain is found at 53–333 (FEVLQPLQSG…DEILNFGMWT (281 aa)). Residues 59–67 (LQSGSEGRV) and K82 contribute to the ATP site. Catalysis depends on D167, which acts as the Proton acceptor.

This sequence belongs to the protein kinase superfamily. Ser/Thr protein kinase family.

The catalysed reaction is L-seryl-[protein] + ATP = O-phospho-L-seryl-[protein] + ADP + H(+). It carries out the reaction L-threonyl-[protein] + ATP = O-phospho-L-threonyl-[protein] + ADP + H(+). Its function is as follows. Able to phosphorylate in vitro the major virion phosphoprotein phosphorylated in vivo. The protein is Serine/threonine-protein kinase (PK) of Sus scrofa (Pig).